The chain runs to 481 residues: Subtilisin-like protease 1 (481 aa).

The signal sequence occupies residues 1 to 19 (MGVFRFISISLAAVSAANA). A propeptide spanning residues 20-116 (AQILSMPHAQ…VEPDTIISVH (97 aa)) is cleaved from the precursor. The Inhibitor I9 domain occupies 34 to 115 (SYIVMMKDDT…FVEPDTIISV (82 aa)). Residues 126-400 (SWGLARISSS…NVLINNGGAK (275 aa)) form the Peptidase S8 domain. Active-site charge relay system residues include aspartate 158 and histidine 190. Positions 175 to 198 (GSNQVNDGDDNDRSGHGTHTSGTM) are disordered. Residue asparagine 251 is glycosylated (N-linked (GlcNAc...) asparagine). The segment at 281 to 312 (GNDNTDARSSSPASEPSVCTVGASAEDDSRSS) is disordered. The span at 282–294 (NDNTDARSSSPAS) shows a compositional bias: polar residues. Catalysis depends on serine 345, which acts as the Charge relay system. The interval 379 to 455 (ASISDVGPGT…HPHTPFPGGD (77 aa)) is disordered. A compositionally biased stretch (pro residues) spans 424–450 (PQQPAPGEPSTPAPAPMPPTPQHPHTP).

This sequence belongs to the peptidase S8 family.

The protein resides in the secreted. In terms of biological role, secreted subtilisin-like serine protease with keratinolytic activity that contributes to pathogenicity. This chain is Subtilisin-like protease 1 (SUB1), found in Arthroderma gypseum (strain ATCC MYA-4604 / CBS 118893) (Microsporum gypseum).